The chain runs to 149 residues: Transcriptional repressor NrdR (149 aa).

A zinc finger spans residues 3–34 (CPFCSENDTKVIDSRLVADGHQVRRRRQCLAC). An ATP-cone domain is found at 49 to 139 (PKVIKSNGNR…VYRSFEDIRE (91 aa)).

Belongs to the NrdR family. Requires Zn(2+) as cofactor.

Negatively regulates transcription of bacterial ribonucleotide reductase nrd genes and operons by binding to NrdR-boxes. In Vibrio atlanticus (strain LGP32) (Vibrio splendidus (strain Mel32)), this protein is Transcriptional repressor NrdR.